The following is a 448-amino-acid chain: tRNA modification GTPase MnmE (448 aa).

Residues Arg25, Glu83, and Lys122 each coordinate (6S)-5-formyl-5,6,7,8-tetrahydrofolate. Residues 218 to 372 enclose the TrmE-type G domain; it reads GFKVAIIGKP…LTQKLQKLLD (155 aa). Asn228 contacts K(+). Residues 228-233, 247-253, and 272-275 contribute to the GTP site; these read NTGKSS, SDIAGTT, and DTAG. Residue Ser232 participates in Mg(2+) binding. Residues Ser247, Ile249, and Thr252 each coordinate K(+). Residue Thr253 participates in Mg(2+) binding. Lys448 contacts (6S)-5-formyl-5,6,7,8-tetrahydrofolate.

It belongs to the TRAFAC class TrmE-Era-EngA-EngB-Septin-like GTPase superfamily. TrmE GTPase family. As to quaternary structure, homodimer. Heterotetramer of two MnmE and two MnmG subunits. The cofactor is K(+).

It is found in the cytoplasm. In terms of biological role, exhibits a very high intrinsic GTPase hydrolysis rate. Involved in the addition of a carboxymethylaminomethyl (cmnm) group at the wobble position (U34) of certain tRNAs, forming tRNA-cmnm(5)s(2)U34. The polypeptide is tRNA modification GTPase MnmE (Nitratiruptor sp. (strain SB155-2)).